The primary structure comprises 405 residues: Amino acid transporter AVT1I (405 aa).

The next 11 membrane-spanning stretches (helical) occupy residues 22–42, 46–66, 93–113, 140–160, 169–189, 201–221, 234–254, 278–298, 318–338, 343–363, and 377–397; these read CFNALNALSGIGILSVPYSLA, WLSLSLLLLLAVTAFYTSLLI, IIVSVFMHLELYLVTTGFLIL, FMATVAFVIMPTLWWDNLSVL, LATTVTLGSISWIGAFDGIGF, IPTALSLYAFCYGAHPVLPTL, VLLICFILCTIGYTSMAVLGY, VAIYTTLVNPVAKYALMITPT, LLISTFFIISSVVIAETLPFF, SLVGALLSVTVSILLPCLCYL, and IMLFGMVVMSVFVGVIGTYIA.

It belongs to the amino acid/polyamine transporter 2 family. Amino acid/auxin permease (AAAP) (TC 2.A.18.5) subfamily.

Its subcellular location is the membrane. This chain is Amino acid transporter AVT1I, found in Arabidopsis thaliana (Mouse-ear cress).